Consider the following 154-residue polypeptide: Small ribosomal subunit protein uS7 (154 aa).

This sequence belongs to the universal ribosomal protein uS7 family. As to quaternary structure, part of the 30S ribosomal subunit. Contacts proteins S9 and S11.

In terms of biological role, one of the primary rRNA binding proteins, it binds directly to 16S rRNA where it nucleates assembly of the head domain of the 30S subunit. Is located at the subunit interface close to the decoding center, probably blocks exit of the E-site tRNA. This is Small ribosomal subunit protein uS7 from Karelsulcia muelleri (strain GWSS) (Sulcia muelleri).